We begin with the raw amino-acid sequence, 84 residues long: MANHKSSIKRIRQEETRRLRNRYYGKTMRNAVRKLRSTTDKAEATAMYPGIVKMVDKLAKTNVIHKNKANNLKSKLAIYINKLA.

It belongs to the bacterial ribosomal protein bS20 family.

Its function is as follows. Binds directly to 16S ribosomal RNA. The chain is Small ribosomal subunit protein bS20 from Bacteroides fragilis (strain ATCC 25285 / DSM 2151 / CCUG 4856 / JCM 11019 / LMG 10263 / NCTC 9343 / Onslow / VPI 2553 / EN-2).